The chain runs to 100 residues: Urease subunit gamma (100 aa).

This sequence belongs to the urease gamma subunit family. Heterotrimer of UreA (gamma), UreB (beta) and UreC (alpha) subunits. Three heterotrimers associate to form the active enzyme.

Its subcellular location is the cytoplasm. It catalyses the reaction urea + 2 H2O + H(+) = hydrogencarbonate + 2 NH4(+). The protein operates within nitrogen metabolism; urea degradation; CO(2) and NH(3) from urea (urease route): step 1/1. Its function is as follows. Expression of the urease operon increases the likelihood of bacterial survival by contributing to acid resistance in vitro and in vivo in BALB/c mice. Y.enterocolitica enters the body via an oral path and must survive the acidic stomach before being able to colonize the intestinal mucosa. The chain is Urease subunit gamma from Yersinia enterocolitica.